Here is a 57-residue protein sequence, read N- to C-terminus: UPF0057 membrane protein T23F2.4 (57 aa).

2 helical membrane-spanning segments follow: residues 3 to 23 (ITCM…VGVF) and 36 to 56 (ILLT…IILA).

Belongs to the UPF0057 (PMP3) family.

Its subcellular location is the membrane. The chain is UPF0057 membrane protein T23F2.4 from Caenorhabditis elegans.